The sequence spans 162 residues: Protein cornichon homolog 2 (162 aa).

The Cytoplasmic segment spans residues 1 to 10 (MAFTFAAFCY). A helical membrane pass occupies residues 11–31 (MLTLVLCASLIFFIIWHIIAF). The Lumenal portion of the chain corresponds to 32–72 (DELRTDFKNPIEQGNPSRARERVKNVERICCLLRKLVVPEY). A helical membrane pass occupies residues 73-93 (CIHGLFCLMFMCAAEWVTLGL). The Cytoplasmic segment spans residues 94–138 (NIPLLFYHLWRYFHRPADGSEVMFDPVSIMNVDILNYCQKEAWCK). A helical membrane pass occupies residues 139–161 (LAFYLLSFFYYLYRVGATVRYVS). A162 is a topological domain (lumenal).

Belongs to the cornichon family.

Its subcellular location is the membrane. Regulates the trafficking and gating properties of AMPA-selective glutamate receptors (AMPARs). This chain is Protein cornichon homolog 2 (cnih2), found in Xenopus tropicalis (Western clawed frog).